We begin with the raw amino-acid sequence, 760 residues long: 5-methyltetrahydropteroyltriglutamate--homocysteine methyltransferase (760 aa).

5-methyltetrahydropteroyltri-L-glutamate contacts are provided by residues 15–18 and lysine 114; that span reads RELK. Residues 436–438 and glutamate 489 each bind L-homocysteine; that span reads IGS. L-methionine-binding positions include 436-438 and glutamate 489; that span reads IGS. 5-methyltetrahydropteroyltri-L-glutamate contacts are provided by residues 520–521 and tryptophan 566; that span reads RC. L-homocysteine is bound at residue aspartate 604. Aspartate 604 lines the L-methionine pocket. Position 610 (glutamate 610) interacts with 5-methyltetrahydropteroyltri-L-glutamate. Zn(2+)-binding residues include histidine 646, cysteine 648, and glutamate 670. The active-site Proton donor is histidine 699. Cysteine 731 contributes to the Zn(2+) binding site.

It belongs to the vitamin-B12 independent methionine synthase family. It depends on Zn(2+) as a cofactor.

The enzyme catalyses 5-methyltetrahydropteroyltri-L-glutamate + L-homocysteine = tetrahydropteroyltri-L-glutamate + L-methionine. It participates in amino-acid biosynthesis; L-methionine biosynthesis via de novo pathway; L-methionine from L-homocysteine (MetE route): step 1/1. Its function is as follows. Catalyzes the transfer of a methyl group from 5-methyltetrahydrofolate to homocysteine resulting in methionine formation. This Shewanella oneidensis (strain ATCC 700550 / JCM 31522 / CIP 106686 / LMG 19005 / NCIMB 14063 / MR-1) protein is 5-methyltetrahydropteroyltriglutamate--homocysteine methyltransferase.